The chain runs to 121 residues: U15-barytoxin-Tl1a (121 aa).

Residues 1–17 form the signal peptide; the sequence is MKLSVIVLVASFGFAVA. Intrachain disulfides connect C56–C74, C67–C80, C71–C119, and C73–C90.

This sequence belongs to the neurotoxin 03 (Tx2) family. 03 subfamily. In terms of tissue distribution, expressed by the venom gland.

Its subcellular location is the secreted. Its function is as follows. Ion channel inhibitor. This chain is U15-barytoxin-Tl1a, found in Trittame loki (Brush-footed trapdoor spider).